The primary structure comprises 2335 residues: Serine/threonine-protein kinase tor1 (2335 aa).

HEAT repeat units lie at residues 1 to 31, 164 to 201, 331 to 371, 410 to 449, 474 to 512, 522 to 560, 562 to 596, 642 to 679, 684 to 722, 728 to 766, 843 to 880, 904 to 923, 924 to 961, 964 to 1003, and 1005 to 1042; these read MEYF…SSTK, LYIS…VVCQ, PYLQ…AVKL, PIQE…AREP, YSLI…RDPI, ESVA…RHLA, PDNI…YNPA, PYIQ…VEGE, DVRG…RSGY, LDYP…LDPY, VFLP…IIGP, LLVI…DEFK, FYLP…FGSN, EYMH…SVNF, and DHAS…QLGY. The FAT domain occupies 1226-1781; it reads VISAHASKCN…VYSLTVSSKS (556 aa). The PI3K/PI4K catalytic domain occupies 1955–2269; that stretch reads FHHTFEVISS…ARHADYAALS (315 aa). The G-loop stretch occupies residues 1961 to 1967; it reads VISSKQR. Thr-1972 bears the Phosphothreonine; by PKB/AKT1 mark. Residues 2134–2142 are catalytic loop; it reads GLGDRHPSN. Residues 2154-2179 are activation loop; it reads HIDFGDCFEVAMHREKFPEKIPFRLT. An FATC domain is found at 2303-2335; sequence EQLPVKAQVEKLIQQATAPENLCRCYVGWCSFW.

It belongs to the PI3/PI4-kinase family. As to quaternary structure, the target of rapamycin complex 2 (TORC2) is composed of at least bit61, pop3/wat1, sin1, ste20 and tor1. In terms of processing, phosphorylation at Thr-1972 in the ATP-binding region by AKT1 strongly reduces kinase activity.

It is found in the cytoplasm. It catalyses the reaction L-seryl-[protein] + ATP = O-phospho-L-seryl-[protein] + ADP + H(+). The enzyme catalyses L-threonyl-[protein] + ATP = O-phospho-L-threonyl-[protein] + ADP + H(+). Catalytic component of TORC2, which regulates multiple cellular processes to control cell growth in response to environmental signals. In response to signals, TORC2 phosphorylates AGC protein kinase family members. TORC2 is required for cell survival under various stress conditions. TORC2 positively controls G1 cell-cycle arrest, sexual development and amino acid uptake. Positively regulates amino acid uptake through the control of expression of amino acid permeases. Responsible for the phosphorylation of AGC kinase gad8 at 'Ser-527' and 'Ser-546', activating gad8 kinase activity and promoting sexual development. The chain is Serine/threonine-protein kinase tor1 from Schizosaccharomyces pombe (strain 972 / ATCC 24843) (Fission yeast).